Consider the following 561-residue polypeptide: Formate--tetrahydrofolate ligase (561 aa).

66–73 lines the ATP pocket; it reads TPAGEGKT.

This sequence belongs to the formate--tetrahydrofolate ligase family.

The catalysed reaction is (6S)-5,6,7,8-tetrahydrofolate + formate + ATP = (6R)-10-formyltetrahydrofolate + ADP + phosphate. Its pathway is one-carbon metabolism; tetrahydrofolate interconversion. The sequence is that of Formate--tetrahydrofolate ligase from Methylibium petroleiphilum (strain ATCC BAA-1232 / LMG 22953 / PM1).